The following is a 315-amino-acid chain: Ribonuclease HII (315 aa).

Residues 78 to 267 (TLVAGVDEAG…VREALGLAPL (190 aa)) enclose the RNase H type-2 domain. Asp84, Glu85, and Asp176 together coordinate a divalent metal cation. Positions 273–292 (APPPESAAEPGGEGAIAGIA) are disordered. Over residues 278–292 (SAAEPGGEGAIAGIA) the composition is skewed to low complexity.

It belongs to the RNase HII family. The cofactor is Mn(2+). Mg(2+) serves as cofactor.

Its subcellular location is the cytoplasm. The enzyme catalyses Endonucleolytic cleavage to 5'-phosphomonoester.. Endonuclease that specifically degrades the RNA of RNA-DNA hybrids. The chain is Ribonuclease HII from Anaeromyxobacter sp. (strain Fw109-5).